The following is a 206-amino-acid chain: Protein SUE1, mitochondrial (206 aa).

The N-terminal 24 residues, 1–24, are a transit peptide targeting the mitochondrion; sequence MILLKRTKIRGVSVSFVSLQRRTH.

It localises to the mitochondrion envelope. Its function is as follows. Required for degradation of unstable forms of cytochrome c. The polypeptide is Protein SUE1, mitochondrial (Saccharomyces cerevisiae (strain ATCC 204508 / S288c) (Baker's yeast)).